The following is a 107-amino-acid chain: Phosphoribosyl-ATP pyrophosphatase (107 aa).

The protein belongs to the PRA-PH family.

The protein resides in the cytoplasm. It catalyses the reaction 1-(5-phospho-beta-D-ribosyl)-ATP + H2O = 1-(5-phospho-beta-D-ribosyl)-5'-AMP + diphosphate + H(+). Its pathway is amino-acid biosynthesis; L-histidine biosynthesis; L-histidine from 5-phospho-alpha-D-ribose 1-diphosphate: step 2/9. The chain is Phosphoribosyl-ATP pyrophosphatase from Brucella abortus (strain S19).